We begin with the raw amino-acid sequence, 426 residues long: Probable auxin efflux carrier component 9 (426 aa).

Residues 1 to 6 (MITGSE) lie on the Extracellular side of the membrane. A helical transmembrane segment spans residues 7 to 27 (VYQVVEAMAPLYTAAALGYGS). At 28 to 38 (VRWLKAFSNEQ) the chain is on the cytoplasmic side. Residues 39–59 (CAGINHFVALYAVPVLIFDMV) form a helical membrane-spanning segment. A (indol-3-yl)acetate-binding site is contributed by V51. At 60–70 (STNNVYKMNGR) the chain is on the extracellular side. A helical transmembrane segment spans residues 71 to 91 (LIAADTLQKAVLLLGLMAWAL). Residues 92 to 114 (WERSRARGAGAKAKAAVSSPLQW) are Cytoplasmic-facing. A helical transmembrane segment spans residues 115 to 135 (VITCFSVASLPNTIIMGVPLL). (indol-3-yl)acetate contacts are provided by N126 and I128. The Extracellular portion of the chain corresponds to 136 to 145 (NGMYGPVSKD). A helical membrane pass occupies residues 146–166 (LMKQIVVMQFCIWYNVIIFLY). Position 159 (Y159) interacts with (indol-3-yl)acetate. Over 167–286 (EYMAARRSAS…LLQIPNTYAS (120 aa)) the chain is Cytoplasmic. Residues 232 to 258 (RDGVSGETTAAAKEVSSGEVAPVEEEE) are disordered. The helical transmembrane segment at 287–307 (FLGLIWSLIAFKCGFSMPKIV) threads the bilayer. Topologically, residues 308 to 310 (EDS) are extracellular. Residues 311–331 (LFTIRTTAVGLSMFSSGTFIA) traverse the membrane as a helical segment. Residues 332–347 (RQSRFVPCGYKIASFS) lie on the Cytoplasmic side of the membrane. The helical transmembrane segment at 348–368 (MVIKFLIGPVVMLFASLVIGM) threads the bilayer. At 369–371 (HGT) the chain is on the extracellular side. The chain crosses the membrane as a helical span at residues 372-392 (LLHIAVVQAALPLAVTSFVYA). V386 lines the (indol-3-yl)acetate pocket. The Cytoplasmic portion of the chain corresponds to 393 to 405 (EEYKVHADIMSTG). The chain crosses the membrane as a helical span at residues 406–426 (VILGIFISLPVTIVYYILLGL).

This sequence belongs to the auxin efflux carrier (TC 2.A.69.1) family. As to quaternary structure, homodimer. In terms of tissue distribution, expressed in roots, leaves and shoot apex. Expressed in roots, stem bases, stems, leaves and young panicles.

It localises to the membrane. In terms of biological role, may act as a component of the auxin efflux carrier. This Oryza sativa subsp. japonica (Rice) protein is Probable auxin efflux carrier component 9.